The chain runs to 149 residues: MNAVEIYTDGACKGNPGPGGWGAFLKSADSQKELFGGELGTTNNRMEMTAVIEALAALKRPCQVTLHVDSQYVLKGMTEWLAGWKARGWKTAAKQPVKNVDLWQRLDELVSTSGHRIDWRWVRGHNGDPGNEHADMLANRGVELALRQR.

Residues Met-1–Glu-143 form the RNase H type-1 domain. 4 residues coordinate Mg(2+): Asp-9, Glu-47, Asp-69, and Asp-135.

Belongs to the RNase H family. In terms of assembly, monomer. It depends on Mg(2+) as a cofactor.

Its subcellular location is the cytoplasm. The enzyme catalyses Endonucleolytic cleavage to 5'-phosphomonoester.. Endonuclease that specifically degrades the RNA of RNA-DNA hybrids. The polypeptide is Ribonuclease H (Albidiferax ferrireducens (strain ATCC BAA-621 / DSM 15236 / T118) (Rhodoferax ferrireducens)).